The sequence spans 396 residues: GTPase Obg (396 aa).

Residues 1–159 (MKFVDEATIY…RNIRLELKVL (159 aa)) form the Obg domain. The 174-residue stretch at 160–333 (ADVGLLGLPN…LCQDIMTWIE (174 aa)) folds into the OBG-type G domain. GTP is bound by residues 166–173 (GLPNAGKS), 191–195 (FTTLV), 213–216 (DIPG), 283–286 (NKTD), and 314–316 (SAL). 2 residues coordinate Mg(2+): serine 173 and threonine 193. Disordered stretches follow at residues 337–356 (EEERDDPEVAEADRLNREQM) and 373–396 (LARKKAKESDDDDDDEDVEVFYAP). The segment covering 347–356 (EADRLNREQM) has biased composition (basic and acidic residues). The span at 381–396 (SDDDDDDEDVEVFYAP) shows a compositional bias: acidic residues.

It belongs to the TRAFAC class OBG-HflX-like GTPase superfamily. OBG GTPase family. Monomer. The cofactor is Mg(2+).

The protein localises to the cytoplasm. An essential GTPase which binds GTP, GDP and possibly (p)ppGpp with moderate affinity, with high nucleotide exchange rates and a fairly low GTP hydrolysis rate. Plays a role in control of the cell cycle, stress response, ribosome biogenesis and in those bacteria that undergo differentiation, in morphogenesis control. In Hahella chejuensis (strain KCTC 2396), this protein is GTPase Obg.